The sequence spans 409 residues: Growth-regulating factor 8 (409 aa).

2 stretches are compositionally biased toward gly residues: residues 1-10 (MLSSCGGHGH) and 27-36 (QQGGGGGGGQ). The disordered stretch occupies residues 1–81 (MLSSCGGHGH…GGGGQMLSFS (81 aa)). Residues 56–68 (SSSSFLGSTSSSC) show a composition bias toward low complexity. The 36-residue stretch at 107–142 (PFTPTQWMELEHQALIYKHIAANVSVPSSLLLPIRR) folds into the QLQ domain. Positions 158 to 202 (DVEPRRCRRTDGKKWRCSRDAVGDQKYCERHINRGRHRSRKHVEG) constitute a WRC domain. 2 consecutive short sequence motifs (bipartite nuclear localization signal) follow at residues 163-173 (RCRRTDGKKWR) and 191-198 (RGRHRSRK). Positions 221–242 (SSRGHTVARQKQVKGSAATVSD) are disordered.

This sequence belongs to the GRF family.

Its subcellular location is the nucleus. Functionally, transcription activator that plays a regulatory role in gibberellin-induced stem elongation. The polypeptide is Growth-regulating factor 8 (GRF8) (Oryza sativa subsp. japonica (Rice)).